We begin with the raw amino-acid sequence, 99 residues long: Co-chaperonin GroES (99 aa).

It belongs to the GroES chaperonin family. Heptamer of 7 subunits arranged in a ring. Interacts with the chaperonin GroEL.

It localises to the cytoplasm. In terms of biological role, together with the chaperonin GroEL, plays an essential role in assisting protein folding. The GroEL-GroES system forms a nano-cage that allows encapsulation of the non-native substrate proteins and provides a physical environment optimized to promote and accelerate protein folding. GroES binds to the apical surface of the GroEL ring, thereby capping the opening of the GroEL channel. In Corynebacterium efficiens (strain DSM 44549 / YS-314 / AJ 12310 / JCM 11189 / NBRC 100395), this protein is Co-chaperonin GroES.